We begin with the raw amino-acid sequence, 274 residues long: Eukaryotic translation initiation factor 3 subunit G (274 aa).

S146, S164, and S171 each carry phosphoserine. The disordered stretch occupies residues 149–170 (ANTSAAATPEPDTDASGKYVPP). The region spanning 191-270 (TTLKISQLNT…LILHLEWPKK (80 aa)) is the RRM domain.

This sequence belongs to the eIF-3 subunit G family. Component of the eukaryotic translation initiation factor 3 (eIF-3) complex.

It localises to the cytoplasm. In terms of biological role, RNA-binding component of the eukaryotic translation initiation factor 3 (eIF-3) complex, which is involved in protein synthesis of a specialized repertoire of mRNAs and, together with other initiation factors, stimulates binding of mRNA and methionyl-tRNAi to the 40S ribosome. The eIF-3 complex specifically targets and initiates translation of a subset of mRNAs involved in cell proliferation. This subunit can bind 18S rRNA. In Meyerozyma guilliermondii (strain ATCC 6260 / CBS 566 / DSM 6381 / JCM 1539 / NBRC 10279 / NRRL Y-324) (Yeast), this protein is Eukaryotic translation initiation factor 3 subunit G.